We begin with the raw amino-acid sequence, 245 residues long: uncharacterized protein (245 aa).

Residues 29–96 (RSLIEATFQR…AQRGFHVTPM (68 aa)) enclose the HTH gntR-type domain. Positions 56–75 (IEDLKSRYEVSGGTVREALS) form a DNA-binding region, H-T-H motif.

This is an uncharacterized protein from Paraburkholderia xenovorans (strain LB400).